We begin with the raw amino-acid sequence, 638 residues long: MKGGCVSQWKAAAGLLFCVTVFASAERPVFTNHFLVELHKGGEEEARQVAAEHGFGVRKLPFAEGLYHFYHNGLAKAKRRRSLHHKQRLERDPRVKRALQQEGFDRKKRGYRDINEIDINMNDPLFTKQWYLINTGQADGTPGLDLNVAEAWELGYTGKGVTIGIMDDGIDYLHPDLASNYNAEASYDFSSNDPYPYPRYTDDWFNSHGTRCAGEVSAAANNNICGVGVAYSSKVAGIRMLDQPFMTDIIEASSISHMPQLIDIYSASWGPTDNGKTVDGPRELTLQAMADGVNKGRGGKGSIYVWASGDGGSYDDCNCDGYASSMWTISINSAINDGRTALYDESCSSTLASTFSNGRKRNPEAGVATTDLYGNCTLRHSGTSAAAPEAAGVFALALEANLGLTWRDMQHLTVLTSKRNQLHDEVHQWRRNGVGLEFNHLFGYGVLDAGAMVKMAKDWKTVPERFHCVGGSVQDPEKIPSTGKLVLTLTTDACEGKENFVRYLEHVQAVITVNATRRGDLNINMTSPMGTKSILLSRRPRDDDSKVGFDKWPFMTTHTWGEDARGTWTLELGFVGSAPQKGAVKEWTLMLHGSQSAPYIDQVVRDYQSKLAMSKKEELEEELDEAVERSLKSILGKH.

Positions 1–25 (MKGGCVSQWKAAAGLLFCVTVFASA) are cleaved as a signal peptide. Residues 26 to 109 (ERPVFTNHFL…QQEGFDRKKR (84 aa)) constitute a propeptide that is removed on maturation. The Peptidase S8 domain maps to 129 to 453 (QWYLINTGQA…YGVLDAGAMV (325 aa)). Active-site charge relay system residues include aspartate 167 and histidine 208. Disulfide bonds link cysteine 225–cysteine 376 and cysteine 317–cysteine 347. The N-linked (GlcNAc...) asparagine glycan is linked to asparagine 375. Serine 384 (charge relay system) is an active-site residue. Residues 461–597 (TVPERFHCVG…TLMLHGSQSA (137 aa)) form the P/Homo B domain. Cysteine 468 and cysteine 494 are joined by a disulfide. N-linked (GlcNAc...) asparagine glycans are attached at residues asparagine 514 and asparagine 524.

Belongs to the peptidase S8 family. Furin subfamily.

It localises to the cytoplasmic vesicle. The protein localises to the secretory vesicle. The protein resides in the secreted. The catalysed reaction is Release of protein hormones and neuropeptides from their precursors, generally by hydrolysis of -Lys-Arg-|- bonds.. Functionally, serine endopeptidase which is involved in the processing of hormone and other protein precursors at sites comprised of pairs of basic amino acid residues. Responsible for the release of glucagon from proglucagon in pancreatic A cells. The polypeptide is Neuroendocrine convertase 2 (PCSK2) (Sus scrofa (Pig)).